Consider the following 135-residue polypeptide: Small ribosomal subunit protein uS12 (135 aa).

3-methylthioaspartic acid is present on Asp89. The disordered stretch occupies residues 106–135 (GVANRRQSRSKYGAKRPKAGAAQATKGGKK). The segment covering 111–123 (RQSRSKYGAKRPK) has biased composition (basic residues). A compositionally biased stretch (low complexity) spans 124–135 (AGAAQATKGGKK).

It belongs to the universal ribosomal protein uS12 family. Part of the 30S ribosomal subunit. Contacts proteins S8 and S17. May interact with IF1 in the 30S initiation complex.

In terms of biological role, with S4 and S5 plays an important role in translational accuracy. Its function is as follows. Interacts with and stabilizes bases of the 16S rRNA that are involved in tRNA selection in the A site and with the mRNA backbone. Located at the interface of the 30S and 50S subunits, it traverses the body of the 30S subunit contacting proteins on the other side and probably holding the rRNA structure together. The combined cluster of proteins S8, S12 and S17 appears to hold together the shoulder and platform of the 30S subunit. The chain is Small ribosomal subunit protein uS12 from Hydrogenobaculum sp. (strain Y04AAS1).